Consider the following 695-residue polypeptide: G-protein coupled receptor-associated protein LMBRD2 (695 aa).

Residues 1 to 5 (MSGAA) are Extracellular-facing. Residues 6–21 (LGLEIVFVFFLALFLL) form a helical membrane-spanning segment. The Cytoplasmic segment spans residues 22 to 32 (HRYGDFKKQHR). Residues 33 to 53 (LVIIGTLLAWYLCFLIVFILP) traverse the membrane as a helical segment. At 54-105 (LDVSTTIYNRCKHAAANSSPPENSNITGLYATANPVPSQHPCFKPWSYIPDG) the chain is on the extracellular side. N78 carries N-linked (GlcNAc...) asparagine glycosylation. Residues 106–126 (IMPIFWRVVYWTSQFLTWILL) form a helical membrane-spanning segment. Residues 127 to 150 (PFMQSYARSGGFSITGKIKTALIE) are Cytoplasmic-facing. A helical membrane pass occupies residues 151 to 171 (NAIYYGTYLLIFGAFLIYVAV). The Extracellular segment spans residues 172–186 (NPHLHLEWNQLQTIG). Residues 187–207 (IAAANTWGLFLLVLLLGYGLV) form a helical membrane-spanning segment. Over 208–387 (EIPRSYWNGA…ECLLRPWFYK (180 aa)) the chain is Cytoplasmic. The stretch at 227-262 (YFKAAKLMTEKADAEENLEDAMEEVRKVNESIKYNH) forms a coiled coil. Residues 388–408 (ILAVVLSIFSVIVVWSECTFF) form a helical membrane-spanning segment. At 409-432 (STTPVLSLFAVFIQLAEKTYNYIY) the chain is on the extracellular side. A helical transmembrane segment spans residues 433-453 (IEIACFLSIFFLSICVYSTVF). Residues 454–473 (RIRVFNYYYLASHHQTDAYS) lie on the Cytoplasmic side of the membrane. Residues 474–494 (LLFSGMLFCRLTPPLCLNFLG) form a helical membrane-spanning segment. The Extracellular portion of the chain corresponds to 495–521 (LTHMDSSISHKNTQPTAYTSIMGSMKV). The chain crosses the membrane as a helical span at residues 522-542 (LSFIADGFYIYYPMLVVILCI). Topologically, residues 543–695 (ATYFSLGTRC…MSRSDIFNDV (153 aa)) are cytoplasmic. A coiled-coil region spans residues 571-603 (LVNEGKELIRKEKRKRQRQEEGENRRREWKERY). Positions 581 to 628 (KEKRKRQRQEEGENRRREWKERYGHNREDSTRNRNIHTDPKESNFSDV) are disordered. The segment covering 588–624 (RQEEGENRRREWKERYGHNREDSTRNRNIHTDPKESN) has biased composition (basic and acidic residues). At S633 the chain carries Phosphoserine. The tract at residues 662 to 682 (AETFTDDPLESESGRYQPGGR) is disordered.

It belongs to the LIMR family.

It localises to the cell membrane. Recruited to ligand-activated beta-2 adrenergic receptor/ADRB2, it negatively regulates the adrenergic receptor signaling pathway. May also regulate other G-protein coupled receptors including type-1 angiotensin II receptor/AGTR1. This Homo sapiens (Human) protein is G-protein coupled receptor-associated protein LMBRD2.